Here is a 249-residue protein sequence, read N- to C-terminus: Proteasome subunit alpha type-3 (249 aa).

It belongs to the peptidase T1A family. As to quaternary structure, the 26S proteasome consists of a 20S proteasome core and two 19S regulatory subunits. The 20S proteasome core is composed of 28 subunits that are arranged in four stacked rings, resulting in a barrel-shaped structure. The two end rings are each formed by seven alpha subunits, and the two central rings are each formed by seven beta subunits. The catalytic chamber with the active sites is on the inside of the barrel.

Its subcellular location is the cytoplasm. The protein resides in the nucleus. The proteasome is a multicatalytic proteinase complex which is characterized by its ability to cleave peptides with Arg, Phe, Tyr, Leu, and Glu adjacent to the leaving group at neutral or slightly basic pH. The proteasome has an ATP-dependent proteolytic activity. This is Proteasome subunit alpha type-3 (PAG1) from Spinacia oleracea (Spinach).